Reading from the N-terminus, the 367-residue chain is 4-hydroxy-3-methylbut-2-en-1-yl diphosphate synthase (flavodoxin) (367 aa).

4 residues coordinate [4Fe-4S] cluster: cysteine 268, cysteine 271, cysteine 303, and glutamate 310.

The protein belongs to the IspG family. It depends on [4Fe-4S] cluster as a cofactor.

The catalysed reaction is (2E)-4-hydroxy-3-methylbut-2-enyl diphosphate + oxidized [flavodoxin] + H2O + 2 H(+) = 2-C-methyl-D-erythritol 2,4-cyclic diphosphate + reduced [flavodoxin]. It functions in the pathway isoprenoid biosynthesis; isopentenyl diphosphate biosynthesis via DXP pathway; isopentenyl diphosphate from 1-deoxy-D-xylulose 5-phosphate: step 5/6. Its function is as follows. Converts 2C-methyl-D-erythritol 2,4-cyclodiphosphate (ME-2,4cPP) into 1-hydroxy-2-methyl-2-(E)-butenyl 4-diphosphate. This Halalkalibacterium halodurans (strain ATCC BAA-125 / DSM 18197 / FERM 7344 / JCM 9153 / C-125) (Bacillus halodurans) protein is 4-hydroxy-3-methylbut-2-en-1-yl diphosphate synthase (flavodoxin).